A 217-amino-acid polypeptide reads, in one-letter code: Claudin-9 (217 aa).

Residues 1 to 7 (MASTGLE) lie on the Cytoplasmic side of the membrane. Residues 8 to 28 (LLGMTLAVLGWLGTLVSCALP) form a helical membrane-spanning segment. Residues 29–81 (LWKVTAFIGNSIVVAQVVWEGLWMSCVVQSTGQMQCKVYDSLLALPQDLQAAR) lie on the Extracellular side of the membrane. Residues 82-102 (ALCVIALLLALLGLLVAITGA) traverse the membrane as a helical segment. At 103 to 116 (QCTTCVEDEGAKAR) the chain is on the cytoplasmic side. The chain crosses the membrane as a helical span at residues 117–137 (IVLTAGVILLLAGILVLIPVC). Topologically, residues 138–159 (WTAHAIIQDFYNPLVAEALKRE) are extracellular. Residues 160-180 (LGASLYLGWAAAALLMLGGGL) form a helical membrane-spanning segment. At 181 to 217 (LCCTCPPPQVERPRGPRLGYSIPSRSGASGLDKRDYV) the chain is on the cytoplasmic side. The tract at residues 194 to 217 (RGPRLGYSIPSRSGASGLDKRDYV) is disordered.

The protein belongs to the claudin family. Interacts with CLDN1, CD81 and OCLN. Expressed in the liver, in peripheral blood mononuclear cells and hepatocarcinoma cell lines.

Its subcellular location is the cell junction. It is found in the tight junction. It localises to the cell membrane. Plays a major role in tight junction-specific obliteration of the intercellular space, through calcium-independent cell-adhesion activity. In terms of biological role, (Microbial infection) Acts as a receptor for hepatitis C virus (HCV) entry into hepatic cells. The polypeptide is Claudin-9 (CLDN9) (Homo sapiens (Human)).